The sequence spans 392 residues: uncharacterized protein (392 aa).

The signal sequence occupies residues 1–23 (MWTALVLVWISSVLLPRSHMMSA). Residues 24–342 (EPRNIVTNKW…DALTPSLVNK (319 aa)) lie on the Extracellular side of the membrane. A glycan (N-linked (GlcNAc...) asparagine) is linked at asparagine 77. 2 disordered regions span residues 83-154 (AEVT…PRTA) and 167-320 (AAGT…TDSC). The segment covering 86 to 97 (TTHGTNTSTPTT) has biased composition (low complexity). 2 stretches are compositionally biased toward polar residues: residues 107–127 (SRTL…TRPT) and 170–249 (TVNT…SAST). Residue asparagine 172 is glycosylated (N-linked (GlcNAc...) asparagine). 2 stretches are compositionally biased toward low complexity: residues 265-277 (SPTT…LPTQ) and 284-309 (TLLT…SRSS). A helical membrane pass occupies residues 343–363 (MLLLVVLLVGVTLFIAVLVMF). The Cytoplasmic portion of the chain corresponds to 364 to 392 (ALQAYESYKKKDYTQVDYLINGMYADSEM).

It is found in the cell membrane. Its subcellular location is the golgi apparatus. The protein localises to the trans-Golgi network membrane. This is an uncharacterized protein from Mus musculus (Mouse).